Reading from the N-terminus, the 309-residue chain is tRNA uridine(34) hydroxylase (309 aa).

Positions 126–220 (SDPEVIVIDT…YLEQIPPEES (95 aa)) constitute a Rhodanese domain. The Cysteine persulfide intermediate role is filled by Cys180.

This sequence belongs to the TrhO family.

The catalysed reaction is uridine(34) in tRNA + AH2 + O2 = 5-hydroxyuridine(34) in tRNA + A + H2O. Functionally, catalyzes oxygen-dependent 5-hydroxyuridine (ho5U) modification at position 34 in tRNAs. This chain is tRNA uridine(34) hydroxylase, found in Nostoc sp. (strain PCC 7120 / SAG 25.82 / UTEX 2576).